The following is a 96-amino-acid chain: Conotoxin Mr15.1 (96 aa).

An N-terminal signal peptide occupies residues 1–20 (MSTLKMMLLILLLLLPLATF). Residues 21–57 (DSDGQAIPGGGIPSAVNSRVGRLLGGDEKSGRSLEKR) constitute a propeptide that is removed on maturation.

It belongs to the conotoxin N superfamily. Contains 4 disulfide bonds. As to expression, expressed by the venom duct.

It is found in the secreted. In Conus marmoreus (Marble cone), this protein is Conotoxin Mr15.1.